Here is a 370-residue protein sequence, read N- to C-terminus: Molybdenum import ATP-binding protein ModC (370 aa).

The ABC transporter domain maps to 1–232; sequence MLDIDVLRQQ…PDIPDFAAQR (232 aa). 30–37 contributes to the ATP binding site; it reads GRSGAGKT. The region spanning 292-363 is the Mop domain; that stretch reads MVSVQNILAA…IKAMSLLRDE (72 aa).

It belongs to the ABC transporter superfamily. Molybdate importer (TC 3.A.1.8) family. In terms of assembly, the complex is composed of two ATP-binding proteins (ModC), two transmembrane proteins (ModB) and a solute-binding protein (ModA).

It localises to the cell inner membrane. The enzyme catalyses molybdate(out) + ATP + H2O = molybdate(in) + ADP + phosphate + H(+). In terms of biological role, part of the ABC transporter complex ModABC involved in molybdenum import. Responsible for energy coupling to the transport system. This is Molybdenum import ATP-binding protein ModC from Rhodospirillum rubrum (strain ATCC 11170 / ATH 1.1.1 / DSM 467 / LMG 4362 / NCIMB 8255 / S1).